Consider the following 569-residue polypeptide: 2-succinyl-5-enolpyruvyl-6-hydroxy-3-cyclohexene-1-carboxylate synthase (569 aa).

It belongs to the TPP enzyme family. MenD subfamily. Homodimer. The cofactor is Mg(2+). Mn(2+) serves as cofactor. It depends on thiamine diphosphate as a cofactor.

It carries out the reaction isochorismate + 2-oxoglutarate + H(+) = 5-enolpyruvoyl-6-hydroxy-2-succinyl-cyclohex-3-ene-1-carboxylate + CO2. The protein operates within quinol/quinone metabolism; 1,4-dihydroxy-2-naphthoate biosynthesis; 1,4-dihydroxy-2-naphthoate from chorismate: step 2/7. It functions in the pathway cofactor biosynthesis; phylloquinone biosynthesis. Its function is as follows. Catalyzes the thiamine diphosphate-dependent decarboxylation of 2-oxoglutarate and the subsequent addition of the resulting succinic semialdehyde-thiamine pyrophosphate anion to isochorismate to yield 2-succinyl-5-enolpyruvyl-6-hydroxy-3-cyclohexene-1-carboxylate (SEPHCHC). This chain is 2-succinyl-5-enolpyruvyl-6-hydroxy-3-cyclohexene-1-carboxylate synthase, found in Microcystis aeruginosa (strain NIES-843 / IAM M-2473).